Reading from the N-terminus, the 154-residue chain is Nucleoside diphosphate kinase A1 (154 aa).

Residues Lys-13, Phe-61, Arg-89, Thr-95, Arg-106, and Asn-116 each contribute to the ATP site. The active-site Pros-phosphohistidine intermediate is the His-119.

This sequence belongs to the NDK family. The cofactor is Mg(2+).

The protein localises to the cytoplasm. The enzyme catalyses a 2'-deoxyribonucleoside 5'-diphosphate + ATP = a 2'-deoxyribonucleoside 5'-triphosphate + ADP. The catalysed reaction is a ribonucleoside 5'-diphosphate + ATP = a ribonucleoside 5'-triphosphate + ADP. Its function is as follows. Major role in the synthesis of nucleoside triphosphates other than ATP. The ATP gamma phosphate is transferred to the NDP beta phosphate via a ping-pong mechanism, using a phosphorylated active-site intermediate. This Xenopus laevis (African clawed frog) protein is Nucleoside diphosphate kinase A1.